The chain runs to 261 residues: Signal recognition particle SEC65 subunit (261 aa).

Belongs to the SRP19 family. As to quaternary structure, fungal signal recognition particle consists of a 7S RNA molecule (scR1) and at least six protein subunits: SRP72, SRP68, SRP54, SEC65, SRP21 and SRP14.

The protein resides in the cytoplasm. Functionally, signal-recognition-particle assembly has a crucial role in targeting secretory proteins to the rough endoplasmic reticulum membrane. It must be involved intimately in the translocation of a wide variety of protein substrates. The polypeptide is Signal recognition particle SEC65 subunit (SEC65) (Eremothecium gossypii (strain ATCC 10895 / CBS 109.51 / FGSC 9923 / NRRL Y-1056) (Yeast)).